A 95-amino-acid polypeptide reads, in one-letter code: Co-chaperonin GroES (95 aa).

Belongs to the GroES chaperonin family. Heptamer of 7 subunits arranged in a ring. Interacts with the chaperonin GroEL.

It is found in the cytoplasm. In terms of biological role, together with the chaperonin GroEL, plays an essential role in assisting protein folding. The GroEL-GroES system forms a nano-cage that allows encapsulation of the non-native substrate proteins and provides a physical environment optimized to promote and accelerate protein folding. GroES binds to the apical surface of the GroEL ring, thereby capping the opening of the GroEL channel. This is Co-chaperonin GroES from Francisella tularensis subsp. tularensis (strain FSC 198).